A 360-amino-acid polypeptide reads, in one-letter code: BLOC-1-related complex subunit 6 (360 aa).

A compositionally biased stretch (basic and acidic residues) spans 1–10 (MEAARGRLGP). Residues 1 to 201 (MEAARGRLGP…AGAGGGRRAT (201 aa)) are disordered. A compositionally biased stretch (polar residues) spans 23–35 (VTFSGRPSRTLSK). Thr41 is subject to Phosphothreonine. The segment covering 71–83 (HRPELDTWEDKPS) has biased composition (basic and acidic residues). Residues 89-100 (SGARGSRGTSGS) are compositionally biased toward low complexity. Phosphoserine is present on Ser130. Residues 144 to 156 (EGDDDDDGDDEEA) are compositionally biased toward acidic residues. A Phosphoserine modification is found at Ser173. The span at 179–198 (GACGGGGSSSSGEAGAGGGR) shows a compositional bias: gly residues. Thr201 carries the phosphothreonine modification. Ser204 carries the post-translational modification Phosphoserine.

This sequence belongs to the BORCS6 family. As to quaternary structure, component of the BLOC-one-related complex (BORC) which is composed of BLOC1S1, BLOC1S2, BORCS5, BORCS6, BORCS7, BORCS8, KXD1 and SNAPIN.

It is found in the lysosome membrane. Functionally, as part of the BORC complex may play a role in lysosomes movement and localization at the cell periphery. Associated with the cytosolic face of lysosomes, the BORC complex may recruit ARL8B and couple lysosomes to microtubule plus-end-directed kinesin motor. The sequence is that of BLOC-1-related complex subunit 6 from Rattus norvegicus (Rat).